Reading from the N-terminus, the 65-residue chain is DNA gyrase inhibitor YacG (65 aa).

The Zn(2+) site is built by cysteine 10, cysteine 13, cysteine 29, and cysteine 33. Residues 45-65 are disordered; that stretch reads EKAIPGAPDMSDSDGWSEDQY. Positions 55–65 are enriched in acidic residues; sequence SDSDGWSEDQY.

The protein belongs to the DNA gyrase inhibitor YacG family. As to quaternary structure, interacts with GyrB. Requires Zn(2+) as cofactor.

In terms of biological role, inhibits all the catalytic activities of DNA gyrase by preventing its interaction with DNA. Acts by binding directly to the C-terminal domain of GyrB, which probably disrupts DNA binding by the gyrase. This chain is DNA gyrase inhibitor YacG, found in Vibrio cholerae serotype O1 (strain ATCC 39315 / El Tor Inaba N16961).